The chain runs to 484 residues: Chromosomal replication initiator protein DnaA (484 aa).

Residues 1–73 (MQEGKNIWSL…EILTEKGHNT (73 aa)) form a domain I, interacts with DnaA modulators region. The tract at residues 73-140 (TINVEFINPP…EDIHTKYRNP (68 aa)) is domain II. The interval 141–357 (FLKKKYTFEN…AAVTKLKAHI (217 aa)) is domain III, AAA+ region. Residues G185, G187, K188, and T189 each contribute to the ATP site. Residues 358–484 (DLEDIEIDTS…IELMNKINKN (127 aa)) are domain IV, binds dsDNA.

This sequence belongs to the DnaA family. In terms of assembly, oligomerizes as a right-handed, spiral filament on DNA at oriC.

The protein resides in the cytoplasm. Its function is as follows. Plays an essential role in the initiation and regulation of chromosomal replication. ATP-DnaA binds to the origin of replication (oriC) to initiate formation of the DNA replication initiation complex once per cell cycle. Binds the DnaA box (a 9 base pair repeat at the origin) and separates the double-stranded (ds)DNA. Forms a right-handed helical filament on oriC DNA; dsDNA binds to the exterior of the filament while single-stranded (ss)DNA is stabiized in the filament's interior. The ATP-DnaA-oriC complex binds and stabilizes one strand of the AT-rich DNA unwinding element (DUE), permitting loading of DNA polymerase. After initiation quickly degrades to an ADP-DnaA complex that is not apt for DNA replication. Binds acidic phospholipids. The chain is Chromosomal replication initiator protein DnaA from Borrelia turicatae (strain 91E135).